The primary structure comprises 1323 residues: Sister chromatid cohesion protein PDS5 homolog A-B (1323 aa).

The HEAT repeat unit spans residues F385–Y421. Positions P1138–R1323 are disordered. The segment covering S1153–S1165 has biased composition (low complexity). Composition is skewed to polar residues over residues D1166–E1176 and L1210–T1220. The segment covering N1235–D1246 has biased composition (basic and acidic residues).

As to quaternary structure, interacts with the cohesin complex. Binds chromatin in a cohesin-dependent manner.

The protein resides in the nucleus. In terms of biological role, may regulate sister chromatid cohesion during mitosis and couple it to DNA replication. The polypeptide is Sister chromatid cohesion protein PDS5 homolog A-B (pds5a-b) (Xenopus laevis (African clawed frog)).